A 537-amino-acid polypeptide reads, in one-letter code: Ceramide kinase (537 aa).

The essential for enzyme activity stretch occupies residues 1–115 (MGATGAAEPL…CPEEQLCHLW (115 aa)). Residues 1–125 (MGATGAAEPL…LQTLREMLEK (125 aa)) form a required for binding to sulfatide and phosphoinositides region. Residues 128-278 (SRPKHLLVFI…MDVSSVHHNS (151 aa)) form the DAGKc domain. ATP is bound by residues 138-140 (NPF) and 170-174 (TEHAN). A substrate-binding site is contributed by 195-198 (GGDG). The Proton donor/acceptor role is filled by Asp197. Residues Glu202, 239 to 241 (GST), Arg304, and Arg310 contribute to the ATP site. Phosphoserine occurs at positions 340 and 408. 502–504 (DGE) serves as a coordination point for ATP.

Ca(2+) serves as cofactor. It depends on Mg(2+) as a cofactor. As to expression, high level expression in heart, brain, skeletal muscle, kidney and liver; moderate in peripheral blood leukocytes and thymus; very low in spleen, small intestine, placenta and lung.

The protein resides in the cytoplasm. It localises to the cell membrane. The enzyme catalyses an N-acylsphing-4-enine + ATP = an N-acylsphing-4-enine 1-phosphate + ADP + H(+). It carries out the reaction N-(hexanoyl)sphing-4-enine + ATP = N-hexanoylsphing-4-enine 1-phosphate + ADP + H(+). It catalyses the reaction N-(acetyl)-sphing-4-enine + ATP = N-(acetyl)-sphing-4-enine-1-phosphate + ADP + H(+). The catalysed reaction is N-hexadecanoylsphing-4-enine + ATP = N-(hexadecanoyl)-sphing-4-enine-1-phosphate + ADP + H(+). The enzyme catalyses N-hexanoyl-(4R)-hydroxysphinganine + ATP = N-hexanoyl-(4R)-hydroxysphinganine-1-phosphate + ADP + H(+). Inhibited by sulfatide. Inhibited by sphinganine, sphingenine, and N,N-Dimethylsphingosine (DMS). Cardiolipin at 0.1 uM significantly increases activity, whereas at concentrations &gt;1 uM has an inhibitory effect. Functionally, catalyzes specifically the phosphorylation of ceramide to form ceramide 1-phosphate. Acts efficiently on natural and analog ceramides (C6, C8, C16 ceramides, and C8-dihydroceramide), to a lesser extent on C2-ceramide and C6-dihydroceramide, but not on other lipids, such as various sphingosines. Shows a greater preference for D-erythro isomer of ceramides. Binds phosphoinositides. In Homo sapiens (Human), this protein is Ceramide kinase (CERK).